We begin with the raw amino-acid sequence, 150 residues long: Ribonuclease H (150 aa).

Residues 1-141 enclose the RNase H type-1 domain; that stretch reads MRPVIIHTDG…ADQLARDGLT (141 aa). Residues Asp9, Glu47, Asp69, and Asp133 each coordinate Mg(2+).

It belongs to the RNase H family. Monomer. Mg(2+) is required as a cofactor.

The protein localises to the cytoplasm. It carries out the reaction Endonucleolytic cleavage to 5'-phosphomonoester.. In terms of biological role, endonuclease that specifically degrades the RNA of RNA-DNA hybrids. The chain is Ribonuclease H from Rhodopseudomonas palustris (strain BisB5).